The sequence spans 604 residues: MCGIVGVVGNTNATDILIQGLEKLEYRGYDSAGIFVVGDNKSQLVKSVGRIAEIQAKVGDSVSGTTGIGHTRWATHGKPTEGNAHPHTSGSGRFVLVHNGVIENYLQIKETYLTKHNLKGETDTEIAIHLVEHFVEEDNLSVLEAFKKALHIIEGSYAFALIDSQDADTIYVAKNKSPLLIGLGNGYNMVCSDAMAMIRETSEYMEIHDKELVIVKKDSVEVQDYDGNVIERGSYTAELDLSDIGKGTYPFYMLKEIDEQPTVMRKLISTYANESGDMNVDSDIIKSVQEADRLYILAAGTSYHAGFAAKTMIEKLTDTPVELGVSSEWGYNMPLLSKKPMFILLSQSGETADSRQVLVKANEMGIPSLTITNVPGSTLSREATYTMLIHAGPEIAVASTKAYTAQVATLAFLAKAVGEANGKAEAKDFDLVHELSIVAQSIEATLSEKDVISEKVEQLLISTRNAFYIGRGNDYYVTMEAALKLKEISYIQTEGFAAGELKHGTISLIEDNTPVIALISADSTIAAHTRGNIQEVVSRGANALIIVEEGLEREGDDIIVNKVHPFLSAISMVIPTQLIAYYASLQRGLDVDKPRNLAKAVTVE.

The Nucleophile; for GATase activity role is filled by Cys-2. The Glutamine amidotransferase type-2 domain maps to 2–218; sequence CGIVGVVGNT…DKELVIVKKD (217 aa). 2 SIS domains span residues 284 to 423 and 456 to 594; these read IIKS…ANGK and VEQL…VDKP. Lys-599 functions as the For Fru-6P isomerization activity in the catalytic mechanism.

In terms of assembly, homodimer.

The protein resides in the cytoplasm. It catalyses the reaction D-fructose 6-phosphate + L-glutamine = D-glucosamine 6-phosphate + L-glutamate. In terms of biological role, catalyzes the first step in hexosamine metabolism, converting fructose-6P into glucosamine-6P using glutamine as a nitrogen source. This Streptococcus agalactiae serotype V (strain ATCC BAA-611 / 2603 V/R) protein is Glutamine--fructose-6-phosphate aminotransferase [isomerizing].